We begin with the raw amino-acid sequence, 196 residues long: O-methyltransferase dpmpI (196 aa).

Residues 127–128 (GG), aspartate 152, and 174–175 (SF) contribute to the S-adenosyl-L-methionine site. A disordered region spans residues 166–196 (NGIEAVPHSFEDPQPIKSKSPRLDNLARERL). The span at 186 to 196 (PRLDNLARERL) shows a compositional bias: basic and acidic residues.

Belongs to the class I-like SAM-binding methyltransferase superfamily. Cation-independent O-methyltransferase family.

Its pathway is secondary metabolite biosynthesis; terpenoid biosynthesis. O-methyltransferase; part of the gene cluster that mediates the biosynthesis of diterpenoid pyrones. The first step of the pathway is the synthesis of the alpha-pyrone moiety by the polyketide synthase dpmpA via condensation of one acetyl-CoA starter unit with 3 malonyl-CoA units and 2 methylations. The alpha-pyrone is then combined with geranylgeranyl pyrophosphate (GGPP) formed by the GGPP synthase dpmpD through the action of the prenyltransferase dpmpC to yield a linear alpha-pyrone diterpenoid. Subsequent steps in the diterpenoid pyrone biosynthetic pathway involve the decalin core formation, which is initiated by the epoxidation of the C10-C11 olefin by the FAD-dependent oxidoreductase dpmpE, and is followed by a cyclization cascade catalyzed by the terpene cyclase dpmpB. The short chain dehydrogenase/reductase dpmpG then oxidizes the 8S hydroxy group to a ketone and the short chain dehydrogenase/reductase dpmpH reduces the ketone to the 8R hydroxy group to yield higginsianin B. Higginsianin B is further methylated by the methyltransferase dpmpI to produce the intermediate named FDDP B. The cytochrome P450 monooxygenase dpmpJ then oxidizes the C-26 methyl to primary alcohol, producing the final diterpenoid pyrone with a C-26 primary alcohol on the gamma-pyrone moiety named FDDP C. The protein is O-methyltransferase dpmpI of Macrophomina phaseolina (strain MS6) (Charcoal rot fungus).